A 271-amino-acid polypeptide reads, in one-letter code: Aquaporin-2 (271 aa).

Over 1–11 the chain is Cytoplasmic; sequence MWELRSIAFSR. The helical transmembrane segment at 12 to 32 threads the bilayer; it reads AVLAEFLATLLFVFFGLGSAL. Residues 33 to 40 are Extracellular-facing; sequence QWASSPPS. A helical membrane pass occupies residues 41–59; sequence VLQIAVAFGLGIGILVQAL. Residues 60–64 lie on the Cytoplasmic side of the membrane; the sequence is GHVSG. The segment at residues 65-74 is an intramembrane region (discontinuously helical); that stretch reads AHINPAVTVA. The NPA 1 signature appears at 68–70; sequence NPA. At 75–85 the chain is on the cytoplasmic side; it reads CLVGCHVSFLR. A helical membrane pass occupies residues 86–107; it reads AAFYVAAQLLGAVAGAAILHEI. The Extracellular segment spans residues 108-127; sequence TPVEIRGDLAVNALHNNATA. Asparagine 124 is a glycosylation site (N-linked (GlcNAc...) asparagine). A helical membrane pass occupies residues 128–148; that stretch reads GQAVTVELFLTMQLVLCIFAS. The Cytoplasmic portion of the chain corresponds to 149–156; sequence TDERRGDN. A helical membrane pass occupies residues 157 to 176; sequence LGSPALSIGFSVTLGHLLGI. The Extracellular portion of the chain corresponds to 177-180; the sequence is YFTG. The segment at residues 181–193 is an intramembrane region (discontinuously helical); sequence CSMNPARSLAPAV. The NPA 2 motif lies at 184 to 186; it reads NPA. At 194–201 the chain is on the extracellular side; the sequence is VTGKFDDH. Residues 202–222 traverse the membrane as a helical segment; it reads WVFWIGPLVGAIIGSLLYNYL. Topologically, residues 223–271 are cytoplasmic; sequence LFPSAKSLQERLAVLKGLEPDTDWEEREVRRRQSVELHSPQSLPRGSKA. A disordered region spans residues 251–271; sequence VRRRQSVELHSPQSLPRGSKA. Phosphoserine occurs at positions 256, 261, 264, and 269. Residues 261-271 are compositionally biased toward polar residues; sequence SPQSLPRGSKA.

Belongs to the MIP/aquaporin (TC 1.A.8) family. Homotetramer. Post-translationally, ser-256 phosphorylation is necessary and sufficient for expression at the apical membrane. Endocytosis is not phosphorylation-dependent. In terms of processing, N-glycosylated. As to expression, detected in kidney, in cortical and the medullary collecting tubules (at protein level). Detected in kidney medulla and cortex.

The protein localises to the apical cell membrane. Its subcellular location is the basolateral cell membrane. The protein resides in the cell membrane. It is found in the cytoplasmic vesicle membrane. It localises to the golgi apparatus. The protein localises to the trans-Golgi network membrane. The catalysed reaction is H2O(in) = H2O(out). It catalyses the reaction glycerol(in) = glycerol(out). In terms of biological role, forms a water-specific channel that provides the plasma membranes of renal collecting duct with high permeability to water, thereby permitting water to move in the direction of an osmotic gradient. Plays an essential role in renal water homeostasis. Could also be permeable to glycerol. The protein is Aquaporin-2 of Rattus norvegicus (Rat).